Here is a 480-residue protein sequence, read N- to C-terminus: ATP synthase subunit beta, chloroplastic (480 aa).

Gly-161–Thr-168 is a binding site for ATP.

It belongs to the ATPase alpha/beta chains family. F-type ATPases have 2 components, CF(1) - the catalytic core - and CF(0) - the membrane proton channel. CF(1) has five subunits: alpha(3), beta(3), gamma(1), delta(1), epsilon(1). CF(0) has four main subunits: a(1), b(1), b'(1) and c(9-12).

Its subcellular location is the plastid. The protein resides in the chloroplast thylakoid membrane. It carries out the reaction ATP + H2O + 4 H(+)(in) = ADP + phosphate + 5 H(+)(out). Functionally, produces ATP from ADP in the presence of a proton gradient across the membrane. The catalytic sites are hosted primarily by the beta subunits. This Euglena gracilis protein is ATP synthase subunit beta, chloroplastic.